Here is a 617-residue protein sequence, read N- to C-terminus: Serine/threonine-protein kinase par-4 (617 aa).

The span at 1–11 (MDAPSTSSGAQ) shows a compositional bias: polar residues. A disordered region spans residues 1–59 (MDAPSTSSGAQSKLLMPGDDEADEDHQNRGDPNLQQKQKIQLNVDPDYDDDEDDDCFID). Residues 46-57 (PDYDDDEDDDCF) show a composition bias toward acidic residues. Positions 183–446 (YMWGGQIGTG…CLETMIHPWF (264 aa)) constitute a Protein kinase domain. ATP-binding positions include 189 to 197 (IGTGSYGKV) and Lys-212. The Proton acceptor role is filled by Asp-310. The tract at residues 523 to 617 (LEAKPGDGPD…CIFRSRTDSA (95 aa)) is disordered. Residues 587-597 (DPPPTAAPGAP) are compositionally biased toward pro residues.

This sequence belongs to the protein kinase superfamily. CAMK Ser/Thr protein kinase family. LKB1 subfamily. Interacts with strd-1. Mg(2+) is required as a cofactor. Requires Mn(2+) as cofactor. As to expression, expressed in the gonads, oocytes and early embryos (at protein level).

Its subcellular location is the cytoplasm. The protein localises to the cell cortex. The catalysed reaction is L-seryl-[protein] + ATP = O-phospho-L-seryl-[protein] + ADP + H(+). It carries out the reaction L-threonyl-[protein] + ATP = O-phospho-L-threonyl-[protein] + ADP + H(+). In terms of biological role, required for cytoplasmic partitioning and asymmetric cell division in early embryogenesis. Controls the asymmetric cell division of the Q.p neuroblast lineage. Involved in mediating cell polarization via regulation of anillin family scaffold proteins. Phosphorylates and restricts the asymmetry effectors mex-5 and mex-6 to the anterior cytoplasm of the zygote and maintains these phosphorylations until fertilization. May phosphorylate par-1. Required for strd-1 localization to the cell cortex of early embryos and may be required for strd-1 protein stabilization. May regulate the integrity of the early embryonic cortex in a strd-1-dependent manner. Phosphorylates and regulates aak-2 in response to oxidative stress and during dauer development. May also play a role in motility, behavioral response, regulation of lifespan and dauer formation through this pathway. Required to establish germline stem cell (GSC) quiescence during dauer development. Acts downstream of unc-40 in dendrite outgrowth. May play a role in cell shedding during embryogenesis, probably by phosphorylating pig-1. The chain is Serine/threonine-protein kinase par-4 (par-4) from Caenorhabditis elegans.